The primary structure comprises 138 residues: Ribulose bisphosphate carboxylase small subunit (138 aa).

The protein belongs to the RuBisCO small chain family. In terms of assembly, heterohexadecamer of 8 large and 8 small subunits.

It localises to the plastid. Its subcellular location is the chloroplast. RuBisCO catalyzes two reactions: the carboxylation of D-ribulose 1,5-bisphosphate, the primary event in carbon dioxide fixation, as well as the oxidative fragmentation of the pentose substrate in the photorespiration process. Both reactions occur simultaneously and in competition at the same active site. Although the small subunit is not catalytic it is essential for maximal activity. Carbon dioxide and oxygen bind in the same pocket of the enzyme in a similar manner. This is Ribulose bisphosphate carboxylase small subunit from Galdieria sulphuraria (Red alga).